A 418-amino-acid chain; its full sequence is Acyl-coenzyme A amino acid N-acyltransferase 2 (418 aa).

Catalysis depends on charge relay system residues Ser234, Asp327, and His361. The short motif at 416–418 is the Microbody targeting signal element; the sequence is GKL.

Belongs to the C/M/P thioester hydrolase family.

It is found in the peroxisome. Its function is as follows. Acyltransferase which efficiently conjugates very long-chain and long-chain fatty acids to taurine. Shows no conjugation activity in the presence of glycine. This is Acyl-coenzyme A amino acid N-acyltransferase 2 from Rattus norvegicus (Rat).